A 505-amino-acid chain; its full sequence is Peroxisome proliferator-activated receptor gamma (505 aa).

The tract at residues 1-26 (MGETLGDSLIDPESDSFADTLSASTS) is disordered. A compositionally biased stretch (polar residues) spans 17 to 26 (FADTLSASTS). At S112 the chain carries Phosphoserine; by MAPK. Positions 136–210 (AIECRVCGDK…VGMSHNAIRF (75 aa)) form a DNA-binding region, nuclear receptor. 2 NR C4-type zinc fingers span residues 139–159 (CRVCGDKASGFHYGVHACEGC) and 176–198 (CDLNCRIHKKSRNKCQYCRFQKC). Residues 205 to 280 (HNAIRFGRMP…DKSPFVIYDM (76 aa)) are interaction with FAM120B. One can recognise an NR LBD domain in the interval 238–503 (DLRALAKHLY…HPLLQEIYKD (266 aa)). K252 is covalently cross-linked (Glycyl lysine isopeptide (Lys-Gly) (interchain with G-Cter in ubiquitin)). The 9aaTAD signature appears at 495–503 (PLLQEIYKD).

This sequence belongs to the nuclear hormone receptor family. NR1 subfamily. In terms of assembly, interacts with FOXO1 (acetylated form). Heterodimer with other nuclear receptors, such as RXRA. The heterodimer with the retinoic acid receptor RXRA is called adipocyte-specific transcription factor ARF6. Interacts with NCOA6 coactivator, leading to a strong increase in transcription of target genes. Interacts with coactivator PPARBP, leading to a mild increase in transcription of target genes. Interacts with NOCA7 in a ligand-inducible manner. Interacts with NCOA1 and NCOA2 LXXLL motifs. Interacts with ASXL1, ASXL2, DNTTIP2, FAM120B, MAP2K1/MEK1, NR0B2, PDPK1, PRDM16, PRMT2 and TGFB1I1. Interacts (when activated by agonist) with PPP5C. Interacts with HELZ2 and THRAP3; the interaction stimulates the transcriptional activity of PPARG. Interacts with PER2, the interaction is ligand dependent and blocks PPARG recruitment to target promoters. Interacts with NOCT. Interacts with ACTN4. Interacts (when in the liganded conformation) with GPS2. Interacts with CRY1 and CRY2 in a ligand-dependent manner. In the absence of hormonal ligand, interacts with TACC1. In macrophages, interacts with PAQR3 and STUB1; the interactions promote PPARG poylubiquitination and STUB1-mediated degradation. Post-translationally, phosphorylated at basal conditions and dephosphorylated when treated with the ligand. May be dephosphorylated by PPP5C. The phosphorylated form may be inactive and dephosphorylation induces adipogenic activity. In terms of processing, ubiquitinated by E3 ubiquitin-protein ligase complex containing FBXO9; leading to proteasomal degradation. Ubiquitinated at Lys-252 by TRIM55 leading to proteasomal degradation. Ubiquitinated by E3 ubiquitin-protein ligase STUB1/CHIP; leading to proteasomal degradation.

The protein resides in the nucleus. Its subcellular location is the cytoplasm. Its activity is regulated as follows. PDPK1 activates its transcriptional activity independently of its kinase activity. In terms of biological role, nuclear receptor that binds peroxisome proliferators such as hypolipidemic drugs and fatty acids. Once activated by a ligand, the nuclear receptor binds to DNA specific PPAR response elements (PPRE) and modulates the transcription of its target genes, such as acyl-CoA oxidase. It therefore controls the peroxisomal beta-oxidation pathway of fatty acids. Key regulator of adipocyte differentiation and glucose homeostasis. ARF6 acts as a key regulator of the tissue-specific adipocyte P2 (aP2) enhancer. Acts as a critical regulator of gut homeostasis by suppressing NF-kappa-B-mediated pro-inflammatory responses. Plays a role in the regulation of cardiovascular circadian rhythms by regulating the transcription of BMAL1 in the blood vessels. This Canis lupus familiaris (Dog) protein is Peroxisome proliferator-activated receptor gamma (PPARG).